The sequence spans 303 residues: MDDFTSISLLSLAMLVGCYVSGIIPLAVNFSEEKLKLVTVLGAGLLCGTALAVIVPEGVHALYEEALEAKHHEMGEIHKVKDAETGAEASVAHEHDHSNLHAYIGVSLVLGFVFMLLVDQIGSSHMHSADDPEAARAASSKITTTLGLVVHAAADGVALGAAASTSQTSVQLIVFVAIMLHKAPAAFGLVSFLMHAGLERNRIRKHLLVFALAAPLLSMLTYLGLSKSSKEALSEVNATGVAMLFSAGTFLYVATVHVLPEVGGMGHSHKQDLGAAKGLSRLEVCALVLGCLIPLVLSIGHQH.

The helical transmembrane segment at 7-27 (ISLLSLAMLVGCYVSGIIPLA) threads the bilayer. Asn29 is a glycosylation site (N-linked (GlcNAc...) asparagine). 5 helical membrane passes run 35-55 (LKLV…AVIV), 102-122 (AYIG…DQIG), 142-162 (ITTT…LGAA), 172-192 (LIVF…LVSF), and 206-226 (HLLV…LGLS). N-linked (GlcNAc...) asparagine glycosylation occurs at Asn237. The next 2 helical transmembrane spans lie at 240–260 (GVAM…HVLP) and 282–302 (LEVC…IGHQ).

This sequence belongs to the ZIP transporter (TC 2.A.5) family.

Its subcellular location is the golgi apparatus. It localises to the trans-Golgi network membrane. It is found in the cell membrane. The protein resides in the cytoplasm. The protein localises to the perinuclear region. Its subcellular location is the mitochondrion. It localises to the nucleus. The enzyme catalyses Zn(2+)(in) = Zn(2+)(out). Transports zinc ions across cell and organelle membranes into the cytoplasm and regulates intracellular zinc homeostasis. Participates in the zinc ions efflux out of the secretory compartments. Regulates intracellular zinc level, resulting in the enhancement of AKT1 and MAPK3/MAPK1 (Erk1/2) phosphorylation in response to the BCR activation. Also functions as a membrane androgen receptor that mediates, through a G protein, the non-classical androgen signaling pathway, characterized by the activation of MAPK3/MAPK1 (Erk1/2) and transcription factors CREB1 or ATF1. Moreover, has dual functions as a membrane-bound androgen receptor and as an androgen-dependent zinc transporter both of which are mediated through an inhibitory G protein (Gi) that mediates both MAP kinase and zinc signaling leading to the androgen-dependent apoptotic process. This is Zinc transporter ZIP9-B (slc39a9-b) from Xenopus laevis (African clawed frog).